The sequence spans 545 residues: Capsular polysaccharide phosphotransferase SacB (545 aa).

This sequence belongs to the stealth family.

In terms of biological role, may be the polymerase that links individual UDP-N-acetyl-D-mannosamine monomers. In serotype A the capsule is composed of repeated units of (alpha 1-6)-linked N-acetyl-D-mannosamine-1-phosphate. The polypeptide is Capsular polysaccharide phosphotransferase SacB (sacB) (Neisseria meningitidis serogroup A).